The sequence spans 332 residues: Probable allantoicase (332 aa).

Belongs to the allantoicase family.

The enzyme catalyses allantoate + H2O = (S)-ureidoglycolate + urea. It functions in the pathway nitrogen metabolism; (S)-allantoin degradation; (S)-ureidoglycolate from allantoate (aminidohydrolase route): step 1/1. The polypeptide is Probable allantoicase (Pseudomonas aeruginosa (strain LESB58)).